A 262-amino-acid polypeptide reads, in one-letter code: Acyl-[acyl-carrier-protein]--UDP-N-acetylglucosamine O-acyltransferase (262 aa).

It belongs to the transferase hexapeptide repeat family. LpxA subfamily. Homotrimer.

The protein resides in the cytoplasm. The enzyme catalyses a (3R)-hydroxyacyl-[ACP] + UDP-N-acetyl-alpha-D-glucosamine = a UDP-3-O-[(3R)-3-hydroxyacyl]-N-acetyl-alpha-D-glucosamine + holo-[ACP]. It functions in the pathway glycolipid biosynthesis; lipid IV(A) biosynthesis; lipid IV(A) from (3R)-3-hydroxytetradecanoyl-[acyl-carrier-protein] and UDP-N-acetyl-alpha-D-glucosamine: step 1/6. In terms of biological role, involved in the biosynthesis of lipid A, a phosphorylated glycolipid that anchors the lipopolysaccharide to the outer membrane of the cell. In Aliivibrio fischeri (strain ATCC 700601 / ES114) (Vibrio fischeri), this protein is Acyl-[acyl-carrier-protein]--UDP-N-acetylglucosamine O-acyltransferase.